A 724-amino-acid polypeptide reads, in one-letter code: MDCLCIVTTKKYRYQDEDTPPLEHSPAHLPNQANSPPVIVNTDTLEAPGYELQVNGTEGEMEYEEITLERGNSGLGFSIAGGTDNPHIGDDPSIFITKIIPGGAAAQDGRLRVNDSILFVNEVDVREVTHSAAVEALKEAGSIVRLYVMRRKPPAEKVMEIKLIKGPKGLGFSIAGGVGNQHIPGDNSIYVTKIIEGGAAHKDGRLQIGDKILAVNSVGLEDVMHEDAVAALKNTYDVVYLKVAKPSNAYLSDSYAPPDITTSYSQHLDNEISHSSYLGTDYPTAMTPTSPRRYSPVAKDLLGEEDIPREPRRIVIHRGSTGLGFNIVGGEDGEGIFISFILAGGPADLSGELRKGDQILSVNGVDLRNASHEQAAIALKNAGQTVTIIAQYKPEEYSRFEAKIHDLREQLMNSSLGSGTASLRSNPKRGFYIRALFDYDKTKDCGFLSQALSFRFGDVLHVIDAGDEEWWQARRVHSDSETDDIGFIPSKRRVERREWSRLKAKDWGSSSGSQGREDSVLSYETVTQMEVHYARPIIILGPTKDRANDDLLSEFPDKFGSCVPHTTRPKREYEIDGRDYHFVSSREKMEKDIQAHKFIEAGQYNSHLYGTSVQSVREVAEQGKHCILDVSANAVRRLQAAHLHPIAIFIRPRSLENVLEINKRITEEQARKAFDRATKLEQEFTECFSAIVEGDSFEEIYHKVKRVIEDLSGPYIWVPARERL.

S-palmitoyl cysteine attachment occurs at residues Cys-3 and Cys-5. The tract at residues 15–35 (QDEDTPPLEHSPAHLPNQANS) is disordered. 2 PDZ domains span residues 65-151 (EITL…VMRR) and 160-246 (EIKL…VAKP). Residues Ser-73 and Ser-142 each carry the phosphoserine modification. Tyr-240 carries the post-translational modification Phosphotyrosine. At Ser-295 the chain carries Phosphoserine. The PDZ 3 domain occupies 313-393 (RIVIHRGSTG…QTVTIIAQYK (81 aa)). Phosphoserine is present on residues Ser-415 and Ser-418. Thr-420 carries the post-translational modification Phosphothreonine. Phosphoserine is present on residues Ser-422, Ser-425, Ser-449, and Ser-480. An SH3 domain is found at 428–498 (KRGFYIRALF…PSKRRVERRE (71 aa)). The region spanning 534–709 (ARPIIILGPT…IYHKVKRVIE (176 aa)) is the Guanylate kinase-like domain. Tyr-580 is modified (phosphotyrosine). Phosphoserine is present on residues Ser-606 and Ser-654. Position 715 is a phosphotyrosine (Tyr-715).

This sequence belongs to the MAGUK family. As to quaternary structure, interacts through its PDZ domains with ANO2 and NETO1. Interacts with KCNJ4. Interacts through its first two PDZ domains with GRIN2A, GRIN2B, GRIN2C and GRIN2D. Interacts with ERBB4. Interacts with KCNA1, KCNA2, KCNA3 and KCNA4. Interacts with LRRC4 and LRRC4B. Interacts with SYNGAP1. Interacts with ASIC3. Interacts with SEMA4C. Interacts with CXADR. Interacts with KCND2. Interacts (via first PDZ domain) with CRIPT. Interacts through its first PDZ domain with GRIK2 and KCNA4. Interacts through its second PDZ domain with the PDZ domain of NOS1 or the C-terminus of CAPON. Interacts through its third PDZ domain with NLGN1 and CRIPT, and probably with NLGN2 and NLGN3. Interacts through its guanylate kinase-like domain with DLGAP1/GKAP, DLGAP2, DLGAP3, DLGAP4, MAP1A, BEGAIN and SIPA1L1. Interacts through its guanylate kinase-like domain with KIF13B. Isoform 2 interacts through an L27 domain with HGS/HRS and the first L27 domain of CASK. Interacts with ANKS1B. Interacts with ADR1B. May interact with HTR2A. Interacts with ADAM22, KLHL17 and LGI1. Interacts with FRMPD4 (via C-terminus). Interacts with LRFN1 and LRFN2. Interacts with LRFN4. Interacts (via N-terminal tandem pair of PDZ domains) with GPER1 (via C-terminus tail motif); the interaction is direct and induces the increase of GPER1 protein levels residing at the plasma membrane surface in a estradiol-independent manner. Interacts (via N-terminus tandem pair of PDZ domains) with NOS1 (via N-terminal domain). Interacts with SHANK3. Interacts with GPR85. Interacts with CACNG2 and MPP2 (via the SH3-Guanylate kinase-like sub-module). Interacts with ADGRB1. Found in a complex with PRR7 and GRIN1. Interacts (via PDZ3 domain and to lesser degree via PDZ2 domain) with PRR7. Component of the postsynaptic hippocampal AMPA-type glutamate receptor (AMPAR) complex, at least composed of pore forming AMPAR subunits GRIA1, GRIA2 and GRIA3 and AMPAR auxiliary proteins SHISA6 and SHISA7. Interacts (via its first two PDZ domains) with SHISA6 and SHISA7 (via PDZ-binding motif); the interaction is direct. Interacts (via PDZ domain 2) with SEMA4F (via PDZ-binding motif); this interaction may promote translocation of DLG4/SAP90 to the membrane. Interacts with RPH3A and GRIN2A; this ternary complex regulates NMDA receptor composition at postsynaptic membranes. Interacts with ABR and BCR. Interacts with DGKI (via PDZ-binding motif); controls the localization of DGKI to the synapse. Interacts with C9orf72, SMCR8 and RAB39B. Interacts with ZDHHC5. Interacts with PTEN (via PDZ domain-binding motif); the interaction is induced by NMDA and is required for PTEN location at postsynaptic density. Found in a complex with GRIA1, GRIA2, GRIA3, GRIA4, CACNG8 and CNIH2. Interacts with FAM81A; the interaction facilitates condensate formation via liquid-liquid phase separation. Interacts with ADGRL3. Interacts with SORCS3. In terms of processing, palmitoylated. Palmitoylation is required for targeting to postsynaptic density, plasma membrane and synapses. Palmitoylation by ZDHHC2 occurs when the synaptic activity decreases and induces DLG4 synaptic clustering. Palmitoylation by ZDHHC15 regulates trafficking to the postsynaptic density and function in synaptogenesis. Palmitoylation may play a role in glutamate receptor GRIA1 synapse clustering. Depalmitoylated by ABHD17A and ABHD17B and to a lesser extent by ABHD17C, ABHD12, ABHD13, LYPLA1 and LYPLA2. Undergoes rapid synaptic palmitoylation/depalmitoylation cycle during neuronal development which slows down in mature neurons. Ubiquitinated by MDM2 in response to NMDA receptor activation, leading to proteasome-mediated degradation of DLG4 which is required for AMPA receptor endocytosis. In terms of tissue distribution, expressed in brain (at protein level). Detected in juxtaparanodal zones in the central nervous system and at nerve terminal plexuses of basket cells in the cerebellum. Expressed in cerebrum. Expressed in hippocampal neurons (at protein level). Isoform 1 and isoform 2: highly expressed in cerebellum, cortex, hippocampus, and corpus striatum.

Its subcellular location is the cell membrane. It is found in the postsynaptic density. The protein localises to the synapse. It localises to the cytoplasm. The protein resides in the cell projection. Its subcellular location is the axon. It is found in the dendritic spine. The protein localises to the dendrite. It localises to the presynapse. Its function is as follows. Postsynaptic scaffolding protein that plays a critical role in synaptogenesis and synaptic plasticity by providing a platform for the postsynaptic clustering of crucial synaptic proteins. Interacts with the cytoplasmic tail of NMDA receptor subunits and shaker-type potassium channels. Required for synaptic plasticity associated with NMDA receptor signaling. Overexpression or depletion of DLG4 changes the ratio of excitatory to inhibitory synapses in hippocampal neurons. May reduce the amplitude of ASIC3 acid-evoked currents by retaining the channel intracellularly. May regulate the intracellular trafficking of ADR1B. Also regulates AMPA-type glutamate receptor (AMPAR) immobilization at postsynaptic density keeping the channels in an activated state in the presence of glutamate and preventing synaptic depression. Under basal conditions, cooperates with FYN to stabilize palmitoyltransferase ZDHHC5 at the synaptic membrane through FYN-mediated phosphorylation of ZDHHC5 and its subsequent inhibition of association with endocytic proteins. This is Disks large homolog 4 from Rattus norvegicus (Rat).